Reading from the N-terminus, the 921-residue chain is Retinoblastoma-associated protein (921 aa).

Disordered stretches follow at residues 1–31 and 603–634; these read MPPKPLRRAGAARSQRTSPEGGAGTASPPGG and RSPKKKASGHPQSGTSNPDAQPSATSQTQKPQ. Over residues 612–634 the composition is skewed to polar residues; the sequence is HPQSGTSNPDAQPSATSQTQKPQ. The short motif at 853–869 is the Bipartite nuclear localization signal element; that stretch reads KRSAEPSDAPKPLKRLR. A disordered region spans residues 873-921; that stretch reads EGQDEADGGKHLPQESKFQQKLAEMTSTRTRMQKQKLNDGNDTSANEEK. Polar residues predominate over residues 910-921; sequence NDGNDTSANEEK.

Belongs to the retinoblastoma protein (RB) family. Interacts with and sequesters the E2F1 transcription factor, thereby inhibiting E2F1 transcription. Interacts with SUV39H1, KMT5B and KMT5C. As to quaternary structure, (Microbial infection) Interacts with, and is inhibited by fowl adenovirus 1 protein GAM-1. In terms of processing, phosphorylated in G1, thereby releasing E2F1 which is then able to activate cell growth. Dephosphorylated at the late M phase. Phosphorylation of domain C promotes interaction between the C-terminal domain C and the Pocket domain, and thereby inhibits interactions with heterodimeric E2F/DP transcription factor complexes.

Its subcellular location is the nucleus. It localises to the cytoplasm. Its function is as follows. Tumor suppressor that is a key regulator of the G1/S transition of the cell cycle. The hypophosphorylated form binds transcription regulators of the E2F family, preventing transcription of E2F-responsive genes. Both physically blocks E2Fs transactivating domain and recruits chromatin-modifying enzymes that actively repress transcription. Cyclin and CDK-dependent phosphorylation of RB1 induces its dissociation from E2Fs, thereby activating transcription of E2F responsive genes and triggering entry into S phase. RB1 also promotes the G0-G1 transition upon phosphorylation and activation by CDK3/cyclin-C. This is Retinoblastoma-associated protein (RB1) from Gallus gallus (Chicken).